Reading from the N-terminus, the 238-residue chain is Ribosomal RNA small subunit methyltransferase G (238 aa).

Residues G77, F82, 128–129 (AE), and R147 each bind S-adenosyl-L-methionine.

This sequence belongs to the methyltransferase superfamily. RNA methyltransferase RsmG family.

Its subcellular location is the cytoplasm. Its function is as follows. Specifically methylates the N7 position of guanine in position 535 of 16S rRNA. The chain is Ribosomal RNA small subunit methyltransferase G from Brevibacillus brevis (strain 47 / JCM 6285 / NBRC 100599).